Consider the following 598-residue polypeptide: Chaperone protein DnaK (598 aa).

At T180 the chain carries Phosphothreonine; by autocatalysis.

This sequence belongs to the heat shock protein 70 family.

Functionally, acts as a chaperone. In Thermosipho africanus (strain TCF52B), this protein is Chaperone protein DnaK.